Reading from the N-terminus, the 294-residue chain is UDP-3-O-acyl-N-acetylglucosamine deacetylase (294 aa).

Zn(2+)-binding residues include His75, His232, and Asp236. The Proton donor role is filled by His259.

Belongs to the LpxC family. It depends on Zn(2+) as a cofactor.

It catalyses the reaction a UDP-3-O-[(3R)-3-hydroxyacyl]-N-acetyl-alpha-D-glucosamine + H2O = a UDP-3-O-[(3R)-3-hydroxyacyl]-alpha-D-glucosamine + acetate. It functions in the pathway glycolipid biosynthesis; lipid IV(A) biosynthesis; lipid IV(A) from (3R)-3-hydroxytetradecanoyl-[acyl-carrier-protein] and UDP-N-acetyl-alpha-D-glucosamine: step 2/6. Its function is as follows. Catalyzes the hydrolysis of UDP-3-O-myristoyl-N-acetylglucosamine to form UDP-3-O-myristoylglucosamine and acetate, the committed step in lipid A biosynthesis. This Campylobacter jejuni subsp. jejuni serotype O:23/36 (strain 81-176) protein is UDP-3-O-acyl-N-acetylglucosamine deacetylase.